A 103-amino-acid polypeptide reads, in one-letter code: Large ribosomal subunit protein bL21 (103 aa).

Belongs to the bacterial ribosomal protein bL21 family. Part of the 50S ribosomal subunit. Contacts protein L20.

Its function is as follows. This protein binds to 23S rRNA in the presence of protein L20. The protein is Large ribosomal subunit protein bL21 of Actinobacillus pleuropneumoniae serotype 5b (strain L20).